The chain runs to 388 residues: 5-hydroxytryptamine receptor 1B (388 aa).

A disordered region spans residues 1-29; sequence MEQPSRLCSPPASGSLTSSQTNHSTFPNP. Topologically, residues 1–45 are extracellular; sequence MEQPSRLCSPPASGSLTSSQTNHSTFPNPNCSAPDLEPYQDSIAL. Polar residues predominate over residues 12-29; it reads ASGSLTSSQTNHSTFPNP. N-linked (GlcNAc...) asparagine glycosylation is found at Asn22 and Asn30. A helical transmembrane segment spans residues 46–71; the sequence is PWKVLLATFLGLITLGTTLSNAFVIA. At 72-85 the chain is on the cytoplasmic side; the sequence is TVSRTRKLHTPANY. A helical membrane pass occupies residues 86 to 110; that stretch reads LIASLAVTDLLVSILVMPISTMYTV. Residues 111 to 118 are Extracellular-facing; that stretch reads TGRWTLGQ. Residues 119 to 144 traverse the membrane as a helical segment; it reads VVCDFWLSSDITCCTASILHLCVIAL. Cys121 and Cys197 are oxidised to a cystine. Positions 128 and 133 each coordinate ergotamine. The DRY motif; important for ligand-induced conformation changes and signaling signature appears at 145–147; that stretch reads DRY. Residues 145–164 lie on the Cytoplasmic side of the membrane; it reads DRYWAITDAVEYSAKRTPKR. The helical transmembrane segment at 165-183 threads the bilayer; the sequence is AAGMIIMVWVFSVSISMPP. Residues 184–203 are Extracellular-facing; it reads LFWRQAKAEEVADCSVNTDH. Val199 provides a ligand contact to ergotamine. A helical transmembrane segment spans residues 204–227; that stretch reads ILYTVYSTVGAFYFPTLLLIALYG. Residues 228-313 lie on the Cytoplasmic side of the membrane; the sequence is RIYVEARSRI…AARERKATRT (86 aa). The interval 249–282 is disordered; the sequence is LTRAQLITDSPGSSSSGTSINSRAPEGPSESGSP. Residues 255–270 are compositionally biased toward low complexity; the sequence is ITDSPGSSSSGTSINS. A helical transmembrane segment spans residues 314-335; the sequence is LGIILGAFIVCWLPFFIISLAL. Over 336–345 the chain is Extracellular; that stretch reads PICDDACWFH. Residues 346–368 form a helical membrane-spanning segment; that stretch reads LAIFDFFNWLGYLNSLINPIIYT. An NPxxY motif; important for ligand-induced conformation changes and signaling motif is present at residues 363–367; the sequence is NPIIY. The Cytoplasmic segment spans residues 369–388; sequence KSNDDFKQAFQKLMRFRRTS.

It belongs to the G-protein coupled receptor 1 family. As to quaternary structure, homodimer. Heterodimer with HTR1D. Phosphorylated. Desensitization of the receptor may be mediated by its phosphorylation. Post-translationally, palmitoylated.

The protein resides in the cell membrane. G-protein coupled receptor for 5-hydroxytryptamine (serotonin). Also functions as a receptor for ergot alkaloid derivatives, various anxiolytic and antidepressant drugs and other psychoactive substances, such as lysergic acid diethylamide (LSD). Ligand binding causes a conformation change that triggers signaling via guanine nucleotide-binding proteins (G proteins) and modulates the activity of downstream effectors, such as adenylate cyclase. HTR1B is coupled to G(i)/G(o) G alpha proteins and mediates inhibitory neurotransmission by inhibiting adenylate cyclase activity. Arrestin family members inhibit signaling via G proteins and mediate activation of alternative signaling pathways. Regulates the release of 5-hydroxytryptamine, dopamine and acetylcholine in the brain, and thereby affects neural activity, nociceptive processing, pain perception, mood and behavior. Besides, plays a role in vasoconstriction of cerebral arteries. This chain is 5-hydroxytryptamine receptor 1B (HTR1B), found in Didelphis virginiana (North American opossum).